Consider the following 59-residue polypeptide: Kunitz-type serine protease inhibitor LmKTT-1c (59 aa).

Residues 4–54 (CQLPSDVGKGKASFTRYFYNEESGKCETFIYGGMGGNSNNFLTKEACCREC) form the BPTI/Kunitz inhibitor domain. 3 disulfide bridges follow: cysteine 4-cysteine 54, cysteine 29-cysteine 50, and cysteine 51-cysteine 59.

This sequence belongs to the venom Kunitz-type family. Scorpion delta-Ktx subfamily. Delta-Ktx 2 sub-subfamily. In terms of tissue distribution, expressed by the venom gland.

It localises to the secreted. Serine protease inhibitor that inhibits trypsin at a molar ratio of 1:1 (Ki=124 nM). The chain is Kunitz-type serine protease inhibitor LmKTT-1c from Lychas mucronatus (Chinese swimming scorpion).